We begin with the raw amino-acid sequence, 130 residues long: Small ribosomal subunit protein uS11 (130 aa).

The protein belongs to the universal ribosomal protein uS11 family. Part of the 30S ribosomal subunit. Interacts with proteins S7 and S18. Binds to IF-3.

Located on the platform of the 30S subunit, it bridges several disparate RNA helices of the 16S rRNA. Forms part of the Shine-Dalgarno cleft in the 70S ribosome. In Tropheryma whipplei (strain TW08/27) (Whipple's bacillus), this protein is Small ribosomal subunit protein uS11.